We begin with the raw amino-acid sequence, 157 residues long: Large ribosomal subunit protein uL11 (157 aa).

The protein belongs to the universal ribosomal protein uL11 family. In terms of assembly, part of the ribosomal stalk of the 50S ribosomal subunit. Interacts with L10 and the large rRNA to form the base of the stalk. L10 forms an elongated spine to which L12 dimers bind in a sequential fashion forming a multimeric L10(L12)X complex.

Functionally, forms part of the ribosomal stalk which helps the ribosome interact with GTP-bound translation factors. This Archaeoglobus fulgidus (strain ATCC 49558 / DSM 4304 / JCM 9628 / NBRC 100126 / VC-16) protein is Large ribosomal subunit protein uL11.